A 469-amino-acid polypeptide reads, in one-letter code: Adenosylhomocysteinase (469 aa).

Residues threonine 63, aspartate 139, and glutamate 164 each coordinate substrate. 165–167 (TTT) contacts NAD(+). Residues lysine 194 and aspartate 198 each contribute to the substrate site. NAD(+) contacts are provided by residues asparagine 199, 228–233 (GYGDVG), glutamate 251, asparagine 300, 321–323 (IGH), and asparagine 375.

This sequence belongs to the adenosylhomocysteinase family. NAD(+) serves as cofactor.

It is found in the cytoplasm. It catalyses the reaction S-adenosyl-L-homocysteine + H2O = L-homocysteine + adenosine. The protein operates within amino-acid biosynthesis; L-homocysteine biosynthesis; L-homocysteine from S-adenosyl-L-homocysteine: step 1/1. Its function is as follows. May play a key role in the regulation of the intracellular concentration of adenosylhomocysteine. The sequence is that of Adenosylhomocysteinase from Pseudomonas fluorescens (strain ATCC BAA-477 / NRRL B-23932 / Pf-5).